The chain runs to 612 residues: Dihydroxy-acid dehydratase (612 aa).

Asp-81 contributes to the Mg(2+) binding site. Cys-122 contacts [2Fe-2S] cluster. Residues Asp-123 and Lys-124 each contribute to the Mg(2+) site. Position 124 is an N6-carboxylysine (Lys-124). Cys-193 contacts [2Fe-2S] cluster. Residue Glu-489 participates in Mg(2+) binding. Residue Ser-515 is the Proton acceptor of the active site.

Belongs to the IlvD/Edd family. In terms of assembly, homodimer. [2Fe-2S] cluster serves as cofactor. The cofactor is Mg(2+).

The enzyme catalyses (2R)-2,3-dihydroxy-3-methylbutanoate = 3-methyl-2-oxobutanoate + H2O. It catalyses the reaction (2R,3R)-2,3-dihydroxy-3-methylpentanoate = (S)-3-methyl-2-oxopentanoate + H2O. The protein operates within amino-acid biosynthesis; L-isoleucine biosynthesis; L-isoleucine from 2-oxobutanoate: step 3/4. It functions in the pathway amino-acid biosynthesis; L-valine biosynthesis; L-valine from pyruvate: step 3/4. Functions in the biosynthesis of branched-chain amino acids. Catalyzes the dehydration of (2R,3R)-2,3-dihydroxy-3-methylpentanoate (2,3-dihydroxy-3-methylvalerate) into 2-oxo-3-methylpentanoate (2-oxo-3-methylvalerate) and of (2R)-2,3-dihydroxy-3-methylbutanoate (2,3-dihydroxyisovalerate) into 2-oxo-3-methylbutanoate (2-oxoisovalerate), the penultimate precursor to L-isoleucine and L-valine, respectively. This chain is Dihydroxy-acid dehydratase, found in Stutzerimonas stutzeri (strain A1501) (Pseudomonas stutzeri).